Consider the following 182-residue polypeptide: ATP-dependent protease subunit HslV (182 aa).

Residue Thr12 is part of the active site. Positions 167, 170, and 173 each coordinate Na(+).

It belongs to the peptidase T1B family. HslV subfamily. In terms of assembly, a double ring-shaped homohexamer of HslV is capped on each side by a ring-shaped HslU homohexamer. The assembly of the HslU/HslV complex is dependent on binding of ATP.

It is found in the cytoplasm. The catalysed reaction is ATP-dependent cleavage of peptide bonds with broad specificity.. With respect to regulation, allosterically activated by HslU binding. Functionally, protease subunit of a proteasome-like degradation complex believed to be a general protein degrading machinery. This is ATP-dependent protease subunit HslV from Chlorobium phaeovibrioides (strain DSM 265 / 1930) (Prosthecochloris vibrioformis (strain DSM 265)).